Consider the following 523-residue polypeptide: Protein tweety homolog 3 (523 aa).

The Extracellular portion of the chain corresponds to 1–42; the sequence is MAGVSYAAPWWVSLLHRLPHFDLSWEATSSQFRPEDTDYQQA. The helical transmembrane segment at 43 to 63 threads the bilayer; that stretch reads LLLLGAAALACLALDLLFLLF. The Cytoplasmic segment spans residues 64–86; that stretch reads YSFWLCCRRRKSEEHLDADCCCT. A helical transmembrane segment spans residues 87-107; the sequence is AWCVIIATLVCSAGIAVGFYG. The Extracellular segment spans residues 108-211; sequence NGETSDGIHR…VDLYDWYRWL (104 aa). Ca(2+) contacts are provided by E110 and D113. Residues N126 and N144 are each glycosylated (N-linked (GlcNAc...) asparagine). A helical transmembrane segment spans residues 212–232; the sequence is GYLGLLLLDVIICLLVLVGLI. Over 233-236 the chain is Cytoplasmic; the sequence is RSSK. Residues 237–257 traverse the membrane as a helical segment; it reads GILVGVCLLGVLALVISWGAL. The Extracellular segment spans residues 258–386; sequence GLELAVSVGS…LTGFCYDGVE (129 aa). Intrachain disulfides connect C271-C381 and C299-C366. An N-linked (GlcNAc...) asparagine glycan is attached at N351. The helical transmembrane segment at 387–407 threads the bilayer; the sequence is GLIYLALFSFVTALMFSSIVC. Residues 408-523 lie on the Cytoplasmic side of the membrane; sequence SVPHTWQQKR…QPRPDSSGSH (116 aa). Disordered regions lie at residues 413 to 435 and 482 to 523; these read WQQK…RQAH and QNPR…SGSH. S496 is subject to Phosphoserine. Residues 498-501 carry the PY-motif; mediates interaction with NEDD4L motif; the sequence is PPSY. Polar residues predominate over residues 501-523; sequence YTSSMRAKYLATSQPRPDSSGSH. A phosphoserine mark is found at S504 and S522.

Belongs to the tweety family. As to quaternary structure, homotetramer; disulfide-linked. Homodimer. Interacts with NEDD4L. Ubiquitinated by NEDD4L. Post-translationally, N-Glycosylated. Contains high-mannose, hybrid and complex oligosaccharides. In terms of tissue distribution, expressed in excitable tissues. Expressed in the brain, heart, skeletal muscle, colon, spleen, kidney and peripheral blood leukocytes.

Its subcellular location is the cell membrane. The catalysed reaction is chloride(in) = chloride(out). It catalyses the reaction L-glutamate(out) = L-glutamate(in). Its function is as follows. Calcium-independent, swelling-dependent volume-regulated anion channel (VRAC-swell) which plays a pivotal role in the process of regulatory volume decrease (RVD) in the brain through the efflux of anions like chloride and organic osmolytes like glutamate. Probable large-conductance Ca(2+)-activated chloride channel. This is Protein tweety homolog 3 (TTYH3) from Homo sapiens (Human).